The sequence spans 247 residues: Ribosomal RNA small subunit methyltransferase G (247 aa).

S-adenosyl-L-methionine contacts are provided by residues Gly84, Phe89, 136 to 137 (AE), and Arg155.

This sequence belongs to the methyltransferase superfamily. RNA methyltransferase RsmG family.

It is found in the cytoplasm. Functionally, specifically methylates the N7 position of a guanine in 16S rRNA. The chain is Ribosomal RNA small subunit methyltransferase G from Prochlorococcus marinus (strain MIT 9313).